Reading from the N-terminus, the 176-residue chain is Cytochrome c-552 (176 aa).

Residues 12–32 form a helical; Signal-anchor membrane-spanning segment; sequence GALIGSLLFLLLMSWAASGIF. Heme c-binding residues include Cys90, Cys93, His94, Met126, and Met154.

Post-translationally, binds 1 heme c group covalently per subunit.

The protein resides in the cell membrane. Functionally, mediates the electron transport between the cytochrome bc1 complex and cytochrome-c oxidase. This is Cytochrome c-552 (cycM) from Paracoccus denitrificans.